Here is a 39-residue protein sequence, read N- to C-terminus: Cytochrome b559 subunit beta (39 aa).

The chain crosses the membrane as a helical span at residues 14–30 (WLAIHGLAVPTVFFLGS). Residue His-18 participates in heme binding.

The protein belongs to the PsbE/PsbF family. In terms of assembly, heterodimer of an alpha subunit and a beta subunit. PSII is composed of 1 copy each of membrane proteins PsbA, PsbB, PsbC, PsbD, PsbE, PsbF, PsbH, PsbI, PsbJ, PsbK, PsbL, PsbM, PsbT, PsbX, PsbY, PsbZ, Psb30/Ycf12, at least 3 peripheral proteins of the oxygen-evolving complex and a large number of cofactors. It forms dimeric complexes. Heme b is required as a cofactor.

Its subcellular location is the plastid. The protein localises to the chloroplast thylakoid membrane. This b-type cytochrome is tightly associated with the reaction center of photosystem II (PSII). PSII is a light-driven water:plastoquinone oxidoreductase that uses light energy to abstract electrons from H(2)O, generating O(2) and a proton gradient subsequently used for ATP formation. It consists of a core antenna complex that captures photons, and an electron transfer chain that converts photonic excitation into a charge separation. The chain is Cytochrome b559 subunit beta from Staurastrum punctulatum (Green alga).